A 131-amino-acid chain; its full sequence is Small ribosomal subunit protein uS9 (131 aa).

This sequence belongs to the universal ribosomal protein uS9 family.

The protein is Small ribosomal subunit protein uS9 of Mycoplasmopsis synoviae (strain 53) (Mycoplasma synoviae).